The primary structure comprises 219 residues: Redox-sensing transcriptional repressor Rex (219 aa).

The H-T-H motif DNA-binding region spans Leu-18 to Phe-57. An NAD(+)-binding site is contributed by Gly-92–Gly-97.

It belongs to the transcriptional regulatory Rex family. As to quaternary structure, homodimer.

It localises to the cytoplasm. Its function is as follows. Modulates transcription in response to changes in cellular NADH/NAD(+) redox state. This is Redox-sensing transcriptional repressor Rex from Exiguobacterium sibiricum (strain DSM 17290 / CCUG 55495 / CIP 109462 / JCM 13490 / 255-15).